A 1043-amino-acid chain; its full sequence is Isoleucine--tRNA ligase (1043 aa).

The 'HIGH' region motif lies at 49-59; it reads PFATGLPHYGH. The 'KMSKS' region signature appears at 592–596; it reads KMSKR. Lys595 is an ATP binding site.

Belongs to the class-I aminoacyl-tRNA synthetase family. IleS type 2 subfamily. Monomer. Zn(2+) is required as a cofactor.

Its subcellular location is the cytoplasm. The enzyme catalyses tRNA(Ile) + L-isoleucine + ATP = L-isoleucyl-tRNA(Ile) + AMP + diphosphate. Functionally, catalyzes the attachment of isoleucine to tRNA(Ile). As IleRS can inadvertently accommodate and process structurally similar amino acids such as valine, to avoid such errors it has two additional distinct tRNA(Ile)-dependent editing activities. One activity is designated as 'pretransfer' editing and involves the hydrolysis of activated Val-AMP. The other activity is designated 'posttransfer' editing and involves deacylation of mischarged Val-tRNA(Ile). This Chlamydia abortus (strain DSM 27085 / S26/3) (Chlamydophila abortus) protein is Isoleucine--tRNA ligase.